A 623-amino-acid polypeptide reads, in one-letter code: Glutathione import ATP-binding protein GsiA (623 aa).

ABC transporter domains lie at 15 to 269 (VENL…RALL) and 314 to 564 (LRVR…RKLL). ATP contacts are provided by residues 49-56 (GESGSGKS) and 357-364 (GESGSGKS).

Belongs to the ABC transporter superfamily. Glutathione importer (TC 3.A.1.5.11) family. As to quaternary structure, the complex is composed of two ATP-binding proteins (GsiA), two transmembrane proteins (GsiC and GsiD) and a solute-binding protein (GsiB).

The protein localises to the cell inner membrane. It catalyses the reaction glutathione(out) + ATP + H2O = glutathione(in) + ADP + phosphate + H(+). In terms of biological role, part of the ABC transporter complex GsiABCD involved in glutathione import. Responsible for energy coupling to the transport system. The sequence is that of Glutathione import ATP-binding protein GsiA from Escherichia coli O1:K1 / APEC.